The primary structure comprises 366 residues: Galactose-1-phosphate uridylyltransferase (366 aa).

At S27 the chain carries Phosphoserine. 2 residues coordinate Zn(2+): C54 and C57. Residues A63 and 79–80 (ND) contribute to the UDP-alpha-D-glucose site. H124 serves as a coordination point for Zn(2+). N169 provides a ligand contact to UDP-alpha-D-glucose. A Zn(2+)-binding site is contributed by H180. H182 acts as the Tele-UMP-histidine intermediate in catalysis. Q184 lines the UDP-alpha-D-glucose pocket. Positions 198, 297, 314, and 316 each coordinate Fe cation. UDP-alpha-D-glucose contacts are provided by residues 329-332 (KFLV) and 334-335 (FE).

This sequence belongs to the galactose-1-phosphate uridylyltransferase type 1 family. In terms of assembly, homodimer. The cofactor is Zn(2+).

It carries out the reaction alpha-D-galactose 1-phosphate + UDP-alpha-D-glucose = alpha-D-glucose 1-phosphate + UDP-alpha-D-galactose. Its pathway is carbohydrate metabolism; galactose metabolism. The polypeptide is Galactose-1-phosphate uridylyltransferase (GAL7) (Saccharomyces cerevisiae (strain ATCC 204508 / S288c) (Baker's yeast)).